The chain runs to 43 residues: Defensin, isoforms B and C (43 aa).

Intrachain disulfides connect C3/C34, C20/C40, and C24/C42.

The protein belongs to the invertebrate defensin family. Type 1 subfamily.

It is found in the secreted. Involved in anti Gram-positive activity of immune hemolymph of Z.atratus. The sequence is that of Defensin, isoforms B and C from Zophobas atratus (Giant mealworm beetle).